A 261-amino-acid polypeptide reads, in one-letter code: UPF0246 protein azo1887 (261 aa).

It belongs to the UPF0246 family.

The chain is UPF0246 protein azo1887 from Azoarcus sp. (strain BH72).